Reading from the N-terminus, the 492-residue chain is 3-octaprenyl-4-hydroxybenzoate carboxy-lyase (492 aa).

Mn(2+) is bound at residue asparagine 177. Residues 180 to 182, 194 to 196, and 199 to 200 each bind prenylated FMN; these read IYR, RWL, and RG. Glutamate 243 contributes to the Mn(2+) binding site. The Proton donor role is filled by aspartate 292.

The protein belongs to the UbiD family. Homohexamer. Prenylated FMN serves as cofactor. Mn(2+) is required as a cofactor.

The protein localises to the cell membrane. The catalysed reaction is a 4-hydroxy-3-(all-trans-polyprenyl)benzoate + H(+) = a 2-(all-trans-polyprenyl)phenol + CO2. It participates in cofactor biosynthesis; ubiquinone biosynthesis. Functionally, catalyzes the decarboxylation of 3-octaprenyl-4-hydroxy benzoate to 2-octaprenylphenol, an intermediate step in ubiquinone biosynthesis. The protein is 3-octaprenyl-4-hydroxybenzoate carboxy-lyase of Neisseria meningitidis serogroup C / serotype 2a (strain ATCC 700532 / DSM 15464 / FAM18).